The chain runs to 273 residues: Large ribosomal subunit protein uL2 (273 aa).

Disordered regions lie at residues 35–54 (DKKDKSGGRNNNGRITTRHI) and 222–273 (GMAM…RRNK). The span at 229-239 (DHPHGGGEGRN) shows a compositional bias: basic and acidic residues. Positions 253–273 (KGFKTRKNKRTDKYIVRRRNK) are enriched in basic residues.

Belongs to the universal ribosomal protein uL2 family. Part of the 50S ribosomal subunit. Forms a bridge to the 30S subunit in the 70S ribosome.

In terms of biological role, one of the primary rRNA binding proteins. Required for association of the 30S and 50S subunits to form the 70S ribosome, for tRNA binding and peptide bond formation. It has been suggested to have peptidyltransferase activity; this is somewhat controversial. Makes several contacts with the 16S rRNA in the 70S ribosome. This chain is Large ribosomal subunit protein uL2, found in Aeromonas hydrophila subsp. hydrophila (strain ATCC 7966 / DSM 30187 / BCRC 13018 / CCUG 14551 / JCM 1027 / KCTC 2358 / NCIMB 9240 / NCTC 8049).